Reading from the N-terminus, the 473-residue chain is Pre-mRNA-splicing factor prp5 (473 aa).

7 WD repeats span residues 161–191 (GHLG…KIWD), 203–233 (GHIA…KCWD), 245–275 (GHLS…RVWD), 287–317 (GHKS…RLWD), 329–358 (HHKK…KHWK), 370–399 (GHNA…CFWD), and 419–449 (DSEA…KIYK).

The protein belongs to the WD repeat PRL1/PRL2 family. As to quaternary structure, belongs to the 40S cdc5-associated complex (or cwf complex), a spliceosome sub-complex reminiscent of a late-stage spliceosome composed of the U2, U5 and U6 snRNAs and at least brr2, cdc5, cwf2/prp3, cwf3/syf1, cwf4/syf3, cwf5/ecm2, spp42/cwf6, cwf7/spf27, cwf8, cwf9, cwf10, cwf11, cwf12, prp45/cwf13, cwf14, cwf15, cwf16, cwf17, cwf18, cwf19, cwf20, cwf21, cwf22, cwf23, cwf24, cwf25, cwf26, cyp7/cwf27, cwf28, cwf29/ist3, lea1, msl1, prp5/cwf1, prp10, prp12/sap130, prp17, prp22, sap61, sap62, sap114, sap145, slu7, smb1, smd1, smd3, smf1, smg1 and syf2.

The protein resides in the nucleus. Required for both cell cycle progression at G2/M and pre-mRNA splicing. Interacts genetically with the PRP4 kinase. This Schizosaccharomyces pombe (strain 972 / ATCC 24843) (Fission yeast) protein is Pre-mRNA-splicing factor prp5 (prp5).